A 1141-amino-acid chain; its full sequence is Eukaryotic translation initiation factor 3 subunit A (1141 aa).

In terms of domain architecture, PCI spans 319–501 (LQRMAAHVLL…NSIYFGTDLT (183 aa)). Basic and acidic residues-rich tracts occupy residues 588 to 623 (QNNAREEEEARRQEEESRKAKLAEQKRLEQEQEERE) and 829 to 899 (AAEE…RGGD). Disordered regions lie at residues 588–631 (QNNA…QNEI) and 829–1141 (AAEE…VKRR). Ser-908 is subject to Phosphoserine. Composition is skewed to basic and acidic residues over residues 920 to 976 (ERND…EPDT), 990 to 1051 (SRDD…EPQR), 1059 to 1087 (DAPRHADRENRRPAGERRDRDVRETRGDQ), and 1110 to 1131 (TREEKPAAKRDQAQEKENKAGD).

This sequence belongs to the eIF-3 subunit A family. In terms of assembly, component of the eukaryotic translation initiation factor 3 (eIF-3) complex. The eIF-3 complex interacts with pix.

It localises to the cytoplasm. Its function is as follows. RNA-binding component of the eukaryotic translation initiation factor 3 (eIF-3) complex, which is involved in protein synthesis of a specialized repertoire of mRNAs and, together with other initiation factors, stimulates binding of mRNA and methionyl-tRNAi to the 40S ribosome. The eIF-3 complex specifically targets and initiates translation of a subset of mRNAs involved in cell proliferation. The protein is Eukaryotic translation initiation factor 3 subunit A of Drosophila simulans (Fruit fly).